The chain runs to 211 residues: Uridine kinase (211 aa).

12–19 (GGTGSGKT) provides a ligand contact to ATP.

Belongs to the uridine kinase family.

Its subcellular location is the cytoplasm. The enzyme catalyses uridine + ATP = UMP + ADP + H(+). It carries out the reaction cytidine + ATP = CMP + ADP + H(+). It participates in pyrimidine metabolism; CTP biosynthesis via salvage pathway; CTP from cytidine: step 1/3. The protein operates within pyrimidine metabolism; UMP biosynthesis via salvage pathway; UMP from uridine: step 1/1. The protein is Uridine kinase of Halalkalibacterium halodurans (strain ATCC BAA-125 / DSM 18197 / FERM 7344 / JCM 9153 / C-125) (Bacillus halodurans).